The primary structure comprises 279 residues: Large ribosomal subunit protein uL2 (279 aa).

A disordered region spans residues 223 to 279; sequence TVRGSAMNPNDHPHGGGEGRSPVGMDAPRTPWGKRHMGVKTRNNKKSSTSMIVRRRK. A compositionally biased stretch (basic residues) spans 254 to 267; the sequence is WGKRHMGVKTRNNK.

The protein belongs to the universal ribosomal protein uL2 family. In terms of assembly, part of the 50S ribosomal subunit. Forms a bridge to the 30S subunit in the 70S ribosome.

Functionally, one of the primary rRNA binding proteins. Required for association of the 30S and 50S subunits to form the 70S ribosome, for tRNA binding and peptide bond formation. It has been suggested to have peptidyltransferase activity; this is somewhat controversial. Makes several contacts with the 16S rRNA in the 70S ribosome. The sequence is that of Large ribosomal subunit protein uL2 from Ureaplasma urealyticum serovar 10 (strain ATCC 33699 / Western).